A 285-amino-acid chain; its full sequence is Undecaprenyl-diphosphatase (285 aa).

7 helical membrane-spanning segments follow: residues 3–23 (ILLLVKAAIMGIVEGLTEFLP), 41–61 (GEIVKVFDIAIQTGAMFAVIW), 87–107 (LLIAFVPAVISGLALGGLIKE), 109–129 (LFHPVPVATAFVVGGLIILWV), 197–217 (TEFSFFLGIPTLMGAGAYSLI), 226–246 (GDLPVFAVGVVFAFLSALVCI), and 260–280 (VFAWYRIAFGGLVLLSAWGGW).

This sequence belongs to the UppP family.

It is found in the cell inner membrane. It carries out the reaction di-trans,octa-cis-undecaprenyl diphosphate + H2O = di-trans,octa-cis-undecaprenyl phosphate + phosphate + H(+). In terms of biological role, catalyzes the dephosphorylation of undecaprenyl diphosphate (UPP). Confers resistance to bacitracin. This Methylibium petroleiphilum (strain ATCC BAA-1232 / LMG 22953 / PM1) protein is Undecaprenyl-diphosphatase.